Here is a 549-residue protein sequence, read N- to C-terminus: MALAAAAAAAAAGVSQAAVLGFLQEHGGKVRNSELLSRFKPLLDAGDPRGRAARRDRFKQFVNNVAVVKELDGVKFVVLRKKPRPPEPEPAPFGPPGAAAQPSKPTSTVLPRSASAPGAPPLVRVPRPVEPPGDLGLPTEPQDTPGGPASEPAQPPGERSADPPLPALELAQATERPSADAAPPPRAPSEAASPCSDPPDAEPGPGAAKGPPQQKPCMLPVRCVPAPATLRLRAEEPGLRRQLSEEPSPRSSPLLLRRLSVEESGLGLGLGPGRSPHLRRLSRAGPRLLSPDAEELPAAPPPSAVPLEPSEHEWLVRTAGGRWTHQLHGLLLRDRGLAAKRDFMSGFTALHWAAKSGDGEMALQLVEVARRSGAPVDVNARSHGGYTPLHLAALHGHEDAAVLLVVRLGAQVHVRDHSGRRAYQYLRPGSSYALRRLLGDPGLRGTTEPDATGGGSGSLAARRPVQVAATILSSTTSAFLGVLADDLMLQDLARGLKKSSSFSKFLSASPMAPRKKTKIRGGLPAFSEISRRPTPGPLAGLVPSLPPTT.

Residues 1-17 (MALAAAAAAAAAGVSQA) form the signal peptide. 2 disordered regions span residues 82–219 (KPRP…PCML) and 235–256 (EEPG…PLLL). Over residues 203-216 (PGPGAAKGPPQQKP) the composition is skewed to low complexity. The segment covering 235-248 (EEPGLRRQLSEEPS) has biased composition (basic and acidic residues). S260 is subject to Phosphoserine. ANK repeat units follow at residues 345–374 (SGFT…RSGA) and 384–414 (GGYT…QVHV). Residues 513–549 (PRKKTKIRGGLPAFSEISRRPTPGPLAGLVPSLPPTT) form a disordered region.

The protein belongs to the SOWAH family.

The sequence is that of Ankyrin repeat domain-containing protein SOWAHA (SOWAHA) from Homo sapiens (Human).